The sequence spans 223 residues: Probable Ras-related protein Rab-4A (223 aa).

16 to 23 is a binding site for GTP; it reads GNAGTGKT. The short motif at 38–46 is the Effector region element; sequence TQHTIGAEF. GTP contacts are provided by residues 64-68 and 122-125; these read DTAGQ and NKKD. Residues cysteine 221 and cysteine 223 are each lipidated (S-geranylgeranyl cysteine). Cysteine 223 carries the post-translational modification Cysteine methyl ester.

The protein belongs to the small GTPase superfamily. Rab family.

The protein localises to the cell membrane. Functionally, protein transport. Probably involved in vesicular traffic. This is Probable Ras-related protein Rab-4A from Echinococcus multilocularis (Fox tapeworm).